The primary structure comprises 354 residues: DNA polymerase IV (354 aa).

The region spanning 6–187 is the UmuC domain; sequence IIHIDCDCFY…LPVARLHGVG (182 aa). Aspartate 10 and aspartate 105 together coordinate Mg(2+). Glutamate 106 is a catalytic residue.

Belongs to the DNA polymerase type-Y family. In terms of assembly, monomer. Mg(2+) serves as cofactor.

It is found in the cytoplasm. It catalyses the reaction DNA(n) + a 2'-deoxyribonucleoside 5'-triphosphate = DNA(n+1) + diphosphate. Poorly processive, error-prone DNA polymerase involved in untargeted mutagenesis. Copies undamaged DNA at stalled replication forks, which arise in vivo from mismatched or misaligned primer ends. These misaligned primers can be extended by PolIV. Exhibits no 3'-5' exonuclease (proofreading) activity. May be involved in translesional synthesis, in conjunction with the beta clamp from PolIII. This is DNA polymerase IV from Pseudomonas entomophila (strain L48).